Here is a 1171-residue protein sequence, read N- to C-terminus: Kinesin-like protein GA13060 (1171 aa).

The interval 1 to 24 is disordered; that stretch reads MASSISRNGGFCGALQRAPPPMPP. The region spanning 40–400 is the Kinesin motor domain; that stretch reads KVKVMLRVSD…IQIASRIHRL (361 aa). Disordered stretches follow at residues 737–774, 798–820, 932–955, 1043–1099, and 1124–1143; these read LLGQ…GSRD, LVAS…SQRS, PAYR…SLPS, TSSE…QRHR, and RHSH…EGNG. Residues 805–816 are compositionally biased toward basic residues; sequence SSHHQHQHHRPS. Over residues 1043–1059 the composition is skewed to polar residues; that stretch reads TSSEAYDSGHDSNSTPR. The segment covering 1124–1139 has biased composition (basic residues); the sequence is RHSHGVGGHKKHRHRH.

This sequence belongs to the TRAFAC class myosin-kinesin ATPase superfamily. Kinesin family. KIF26 subfamily.

The protein localises to the cytoplasm. It localises to the cytoskeleton. This chain is Kinesin-like protein GA13060, found in Drosophila pseudoobscura pseudoobscura (Fruit fly).